Reading from the N-terminus, the 935-residue chain is Progesterone receptor (935 aa).

Residues 1–50 (MTELKAKGPRAPHVAGSPSSPKVGSPLPCSQAAGPFPGSQTSDTLPEASA) are disordered. The interval 1-164 (MTELKAKGPR…PATQRVLSPL (164 aa)) is AF3; mediates transcriptional activation. The modulating, Pro-Rich stretch occupies residues 1–568 (MTELKAKGPR…YSFESLPQKI (568 aa)). Position 20 is a phosphoserine (S20). The short motif at 55–59 (LDGLL) is the LXXL motif 1 element. Residues 62–159 (RICQGQDPTD…DPPAAPATQR (98 aa)) are disordered. S81 is subject to Phosphoserine. The LXXL motif 2 signature appears at 115–119 (LDTLW). 2 positions are modified to phosphoserine: S130 and S162. A mediates transcriptional transrepression region spans residues 165 to 305 (MSRSGGKAGD…LATTVTDFIH (141 aa)). The Nuclear localization signal motif lies at 183–187 (KVLPR). Positions 185 to 252 (LPRGLSPSRQ…ALGGAAAGGG (68 aa)) are disordered. A Phosphoserine modification is found at S190. The segment covering 191–203 (PSRQLLLPTSGSP) has biased composition (polar residues). S213 carries the phosphoserine modification. The segment covering 220 to 231 (EVEEEDGSESED) has biased composition (acidic residues). Residues 232–246 (SAGPLLKGKPRALGG) show a composition bias toward low complexity. Position 294 is a phosphoserine; by MAPK1 (S294). Residues 331-365 (GGAGAASAFAPPRSSPSASSTPVPGGDFPDCAYAP) are disordered. The segment covering 335 to 356 (AASAFAPPRSSPSASSTPVPGG) has biased composition (low complexity). A Phosphoserine; by MAPK modification is found at S345. A Glycyl lysine isopeptide (Lys-Gly) (interchain with G-Cter in SUMO); alternate cross-link involves residue K388. A Glycyl lysine isopeptide (Lys-Gly) (interchain with G-Cter in ubiquitin); alternate cross-link involves residue K388. Position 400 is a phosphoserine; by CDK2 (S400). A disordered region spans residues 415–452 (PDFPLGPPPSLPPRAPPPRPGEAAVTAAPASASVSSAS). Pro residues predominate over residues 418–434 (PLGPPPSLPPRAPPPRP). A compositionally biased stretch (low complexity) spans 435–452 (GEAAVTAAPASASVSSAS). The segment at 456–548 (STLECILYKA…VYPPYLNYLR (93 aa)) is AF1; mediates transcriptional activation. Residue K533 forms a Glycyl lysine isopeptide (Lys-Gly) (interchain with G-Cter in SUMO) linkage. 2 NR C4-type zinc fingers span residues 569–589 (CLIC…CGSC) and 605–629 (CAGR…LRKC). Positions 569-641 (CLICGDEASG…AGMVLGGRKF (73 aa)) form a DNA-binding region, nuclear receptor. Position 678 is a phosphoserine (S678). The NR LBD domain maps to 681–915 (QDIQLIPPLI…EFPEMMSEVI (235 aa)). The tract at residues 689 to 935 (LINLLLSIEP…MVKPLLFHKK (247 aa)) is AF2; mediates transcriptional activation.

It belongs to the nuclear hormone receptor family. Interacts with SMARD1 and UNC45A. Interacts with CUEDC2; the interaction promotes ubiquitination, decreases sumoylation, and represses transcriptional activity. Interacts with PIAS3; the interaction promotes sumoylation of PR in a hormone-dependent manner, inhibits DNA-binding, and alters nuclear export. Interacts with SP1; the interaction requires ligand-induced phosphorylation on Ser-344 by ERK1/2-MAPK. Interacts with PRMT2. Interacts with NCOA2 and NCOA1. Interacts with KLF9. Interacts with GTF2B. Phosphorylated on multiple serine sites. Several of these sites are hormone-dependent. Phosphorylation on Ser-294 is highly hormone-dependent and modulates ubiquitination and sumoylation on Lys-388. Phosphorylation on Ser-345 requires induction by hormone. Basal phosphorylation on Ser-81, Ser-162, Ser-190 and Ser-400 is increased in response to progesterone and can be phosphorylated in vitro by the CDK2-A1 complex. Increased levels of phosphorylation on Ser-400 also in the presence of EGF, heregulin, IGF, PMA and FBS. Phosphorylation at this site by CDK2 is ligand-independent, and increases nuclear translocation and transcriptional activity. Phosphorylation at Ser-162 and Ser-294, but not at Ser-190, is impaired during the G(2)/M phase of the cell cycle. Phosphorylation on Ser-345 by ERK1/2 MAPK is required for interaction with SP1. Post-translationally, sumoylation is hormone-dependent and represses transcriptional activity. Sumoylation on all three sites is enhanced by PIAS3. Desumoylated by SENP1. Sumoylation on Lys-388, the main site of sumoylation, is repressed by ubiquitination on the same site, and modulated by phosphorylation at Ser-294. In terms of processing, ubiquitination is hormone-dependent and represses sumoylation on the same site. Promoted by MAPK-mediated phosphorylation on Ser-294. Palmitoylated by ZDHHC7 and ZDHHC21. Palmitoylation is required for plasma membrane targeting and for rapid intracellular signaling via ERK and AKT kinases and cAMP generation.

It is found in the nucleus. The protein resides in the cytoplasm. In terms of biological role, the steroid hormones and their receptors are involved in the regulation of eukaryotic gene expression and affect cellular proliferation and differentiation in target tissues. Transcriptional activator of several progesteron-dependent promoters in a variety of cell types. Involved in activation of SRC-dependent MAPK signaling on hormone stimulation. In Pithecia irrorata (Gray monk saki), this protein is Progesterone receptor (PGR).